Here is a 1038-residue protein sequence, read N- to C-terminus: Importin-7 (1038 aa).

Methionine 1 bears the N-acetylmethionine mark. Residues 22-101 (AERQLNEAHK…RENIVEAIIH (80 aa)) form the Importin N-terminal domain. The segment at 881–910 (EHENDSDDDEDAEDDDETEELGSDEDDIDE) is disordered. Residues 884 to 910 (NDSDDDEDAEDDDETEELGSDEDDIDE) show a composition bias toward acidic residues. Serine 886 bears the Phosphoserine mark. Threonine 898 carries the post-translational modification Phosphothreonine. Serine 903 and serine 1020 each carry phosphoserine.

Belongs to the importin beta family. As to quaternary structure, forms a heterodimer with KPNB1. Interacts with histone H1. Interacts with H2A, H2B, H3 and H4 histones. Interacts with SNUPN and XPO1. Interacts with RPS7 and RPL5. Interacts with RPL23A (via BIB domain). Binds directly to nuclear pore complexes. Interacts with SMAD4 and NUP93; translocates SMAD4 to the nucleus through the NPC upon BMP7 stimulation resulting in activation of SMAD4 signaling. Interacts with phosphorylated SMAD2; the interaction facilitates translocation of SMAD2 to the nucleus. Interacts with SRP19. Interacts with RUNX2; the interaction inhibits RUNX2 nuclear translocation in osteoblasts. Interacts with HDAC6, DLX3 and KLF4; the interaction facilitates HDAC6, DLX3 and KLF4 nuclear translocation in dental papilla cells.

The protein resides in the cytoplasm. It localises to the nucleus. Functionally, functions in nuclear protein import, either by acting as autonomous nuclear transport receptor or as an adapter-like protein in association with the importin-beta subunit KPNB1. Acting autonomously is thought to serve itself as receptor for nuclear localization signals (NLS) and to promote translocation of import substrates through the nuclear pore complex (NPC) by an energy requiring, Ran-dependent mechanism. At the nucleoplasmic side of the NPC, Ran binds to importin, the importin/substrate complex dissociates and importin is re-exported from the nucleus to the cytoplasm where GTP hydrolysis releases Ran. Mediates autonomously the nuclear import of ribosomal proteins RPL23A, RPS7 and RPL5. In association with KPNB1 mediates the nuclear import of H1 histone and the Ran-binding site of IPO7 is not required but synergizes with that of KPNB1 in importin/substrate complex dissociation. Promotes odontoblast differentiation via promoting nuclear translocation of DLX3, KLF4, SMAD2, thereby facilitating the transcription of target genes that play a role in odontoblast differentiation. Facilitates BMP4-induced translocation of SMAD1 to the nucleus and recruitment to the MSX1 gene promoter, thereby promotes the expression of the odontogenic regulator MSX1 in dental mesenchymal cells. Also promotes odontoblast differentiation by facilitating the nuclear translocation of HDAC6 and subsequent repression of RUNX2 expression. Inhibits osteoblast differentiation by inhibiting nuclear translocation of RUNX2 and therefore inhibition of RUNX2 target gene transcription. In vitro, mediates nuclear import of H2A, H2B, H3 and H4 histones. The polypeptide is Importin-7 (Ipo7) (Mus musculus (Mouse)).